Here is a 190-residue protein sequence, read N- to C-terminus: Large ribosomal subunit protein uL22 (190 aa).

A disordered region spans residues 111 to 190; sequence SVQSTKAKAK…TKKKTEGEEK (80 aa). A compositionally biased stretch (basic and acidic residues) spans 125–147; it reads IKSEDSKNSLKVTESKADSKVDA. Residues 167-178 show a composition bias toward low complexity; the sequence is AKVATTKSTATR.

This sequence belongs to the universal ribosomal protein uL22 family. In terms of assembly, part of the 50S ribosomal subunit.

This protein binds specifically to 23S rRNA; its binding is stimulated by other ribosomal proteins, e.g. L4, L17, and L20. It is important during the early stages of 50S assembly. It makes multiple contacts with different domains of the 23S rRNA in the assembled 50S subunit and ribosome. Its function is as follows. The globular domain of the protein is located near the polypeptide exit tunnel on the outside of the subunit, while an extended beta-hairpin is found that lines the wall of the exit tunnel in the center of the 70S ribosome. The protein is Large ribosomal subunit protein uL22 of Helicobacter hepaticus (strain ATCC 51449 / 3B1).